Here is a 343-residue protein sequence, read N- to C-terminus: MSSSPKLFHARPSFFTRRSTPLIVFTSLAIGLTGFLFGLSTILFPGLRLSGRSCLTNLPPKTVKIVWDVAGNSIVNGEVKRHKVMGFVGIQTGFRSAGRRRALRNTWMPSDPEGLRRLEESTGLAIRFIIGKTKDEAKMVELRSEVAMYDDFILLDIEEEYSKLPYKTLAFFKAAYALYDSEFYVKADDDIYLRPDRLSLLLAKERGHSQTYLGCMKKGPVFTDPKLKWYEPLADLLGKEYFLHAYGPIYALSADVVTSLVALKNNSFRMFSNEDVTIGAWMLAMNVNHENLHTLCEPECSPYSIAVWDIPKCSGLCNPEKRMLELHMLESCSKSPTLPSDDE.

The helical; Signal-anchor for type II membrane protein transmembrane segment at 22-42 (LIVFTSLAIGLTGFLFGLSTI) threads the bilayer. N265 carries N-linked (GlcNAc...) asparagine glycosylation.

This sequence belongs to the glycosyltransferase 31 family. It depends on Mn(2+) as a cofactor.

It is found in the golgi apparatus membrane. It participates in protein modification; protein glycosylation. Beta-1,3-galactosyltransferase that transfers galactose from UDP-galactose to substrates with a terminal glycosyl residue. The sequence is that of Probable beta-1,3-galactosyltransferase 13 (B3GALT13) from Arabidopsis thaliana (Mouse-ear cress).